A 1358-amino-acid chain; its full sequence is DNA-directed RNA polymerase subunit beta (1358 aa).

It belongs to the RNA polymerase beta chain family. As to quaternary structure, the RNAP catalytic core consists of 2 alpha, 1 beta, 1 beta' and 1 omega subunit. When a sigma factor is associated with the core the holoenzyme is formed, which can initiate transcription.

It carries out the reaction RNA(n) + a ribonucleoside 5'-triphosphate = RNA(n+1) + diphosphate. Its function is as follows. DNA-dependent RNA polymerase catalyzes the transcription of DNA into RNA using the four ribonucleoside triphosphates as substrates. This Xanthobacter autotrophicus (strain ATCC BAA-1158 / Py2) protein is DNA-directed RNA polymerase subunit beta.